The following is a 365-amino-acid chain: N5-carboxyaminoimidazole ribonucleotide synthase (365 aa).

Residues Arg102, Lys143, 148–154, 177–180, Glu185, and 256–257 each bind ATP; these read GYDGKGQ, EEYV, and NE. Residues 106–286 form the ATP-grasp domain; that stretch reads KLFYRQHNLP…QFEQHLRAII (181 aa).

It belongs to the PurK/PurT family. In terms of assembly, homodimer.

The enzyme catalyses 5-amino-1-(5-phospho-beta-D-ribosyl)imidazole + hydrogencarbonate + ATP = 5-carboxyamino-1-(5-phospho-D-ribosyl)imidazole + ADP + phosphate + 2 H(+). It functions in the pathway purine metabolism; IMP biosynthesis via de novo pathway; 5-amino-1-(5-phospho-D-ribosyl)imidazole-4-carboxylate from 5-amino-1-(5-phospho-D-ribosyl)imidazole (N5-CAIR route): step 1/2. Its function is as follows. Catalyzes the ATP-dependent conversion of 5-aminoimidazole ribonucleotide (AIR) and HCO(3)(-) to N5-carboxyaminoimidazole ribonucleotide (N5-CAIR). This Saccharolobus solfataricus (strain ATCC 35092 / DSM 1617 / JCM 11322 / P2) (Sulfolobus solfataricus) protein is N5-carboxyaminoimidazole ribonucleotide synthase.